Consider the following 116-residue polypeptide: Prefoldin subunit beta (116 aa).

The protein belongs to the prefoldin subunit beta family. As to quaternary structure, heterohexamer of two alpha and four beta subunits.

The protein localises to the cytoplasm. Molecular chaperone capable of stabilizing a range of proteins. Seems to fulfill an ATP-independent, HSP70-like function in archaeal de novo protein folding. This is Prefoldin subunit beta from Methanobrevibacter smithii (strain ATCC 35061 / DSM 861 / OCM 144 / PS).